The primary structure comprises 614 residues: Glutamine--fructose-6-phosphate aminotransferase [isomerizing] (614 aa).

Cysteine 2 acts as the Nucleophile; for GATase activity in catalysis. Residues 2–223 form the Glutamine amidotransferase type-2 domain; it reads CGIIGYIGRR…DGEMAVVTRD (222 aa). 2 consecutive SIS domains span residues 292-431 and 463-604; these read YLDR…GRTI and IAVK…VDRP. Lysine 609 functions as the For Fru-6P isomerization activity in the catalytic mechanism.

As to quaternary structure, homodimer.

It localises to the cytoplasm. The enzyme catalyses D-fructose 6-phosphate + L-glutamine = D-glucosamine 6-phosphate + L-glutamate. Catalyzes the first step in hexosamine metabolism, converting fructose-6P into glucosamine-6P using glutamine as a nitrogen source. The sequence is that of Glutamine--fructose-6-phosphate aminotransferase [isomerizing] from Chlorobaculum tepidum (strain ATCC 49652 / DSM 12025 / NBRC 103806 / TLS) (Chlorobium tepidum).